The chain runs to 351 residues: Phosphoribosylformylglycinamidine cyclo-ligase (351 aa).

This sequence belongs to the AIR synthase family.

The protein localises to the cytoplasm. It catalyses the reaction 2-formamido-N(1)-(5-O-phospho-beta-D-ribosyl)acetamidine + ATP = 5-amino-1-(5-phospho-beta-D-ribosyl)imidazole + ADP + phosphate + H(+). It participates in purine metabolism; IMP biosynthesis via de novo pathway; 5-amino-1-(5-phospho-D-ribosyl)imidazole from N(2)-formyl-N(1)-(5-phospho-D-ribosyl)glycinamide: step 2/2. This Burkholderia ambifaria (strain ATCC BAA-244 / DSM 16087 / CCUG 44356 / LMG 19182 / AMMD) (Burkholderia cepacia (strain AMMD)) protein is Phosphoribosylformylglycinamidine cyclo-ligase.